The sequence spans 199 residues: Mediator of RNA polymerase II transcription subunit 29 (199 aa).

The segment covering M1–V17 has biased composition (low complexity). The tract at residues M1–Q47 is disordered. A2 is modified (N-acetylalanine). Residues S18–G27 show a composition bias toward gly residues. Residues P28–Q47 are compositionally biased toward low complexity.

Belongs to the Mediator complex subunit 29 family. As to quaternary structure, component of the Mediator complex, which is composed of MED1, MED4, MED6, MED7, MED8, MED9, MED10, MED11, MED12, MED13, MED13L, MED14, MED15, MED16, MED17, MED18, MED19, MED20, MED21, MED22, MED23, MED24, MED25, MED26, MED27, MED29, MED30, MED31, CCNC, CDK8 and CDC2L6/CDK11. The MED12, MED13, CCNC and CDK8 subunits form a distinct module termed the CDK8 module. Mediator containing the CDK8 module is less active than Mediator lacking this module in supporting transcriptional activation. Individual preparations of the Mediator complex lacking one or more distinct subunits have been variously termed ARC, CRSP, DRIP, PC2, SMCC and TRAP. Associates with the MED18/MED20 heteromer.

The protein localises to the nucleus. Functionally, component of the Mediator complex, a coactivator involved in the regulated transcription of nearly all RNA polymerase II-dependent genes. Mediator functions as a bridge to convey information from gene-specific regulatory proteins to the basal RNA polymerase II transcription machinery. Mediator is recruited to promoters by direct interactions with regulatory proteins and serves as a scaffold for the assembly of a functional preinitiation complex with RNA polymerase II and the general transcription factors. This Mus musculus (Mouse) protein is Mediator of RNA polymerase II transcription subunit 29 (Med29).